We begin with the raw amino-acid sequence, 943 residues long: Isoleucine--tRNA ligase (943 aa).

The short motif at proline 58–histidine 68 is the 'HIGH' region element. An L-isoleucyl-5'-AMP-binding site is contributed by glutamate 567. The short motif at lysine 608–serine 612 is the 'KMSKS' region element. Lysine 611 serves as a coordination point for ATP. Zn(2+) is bound by residues cysteine 906, cysteine 909, cysteine 926, and cysteine 929.

The protein belongs to the class-I aminoacyl-tRNA synthetase family. IleS type 1 subfamily. Monomer. The cofactor is Zn(2+).

It is found in the cytoplasm. It carries out the reaction tRNA(Ile) + L-isoleucine + ATP = L-isoleucyl-tRNA(Ile) + AMP + diphosphate. Catalyzes the attachment of isoleucine to tRNA(Ile). As IleRS can inadvertently accommodate and process structurally similar amino acids such as valine, to avoid such errors it has two additional distinct tRNA(Ile)-dependent editing activities. One activity is designated as 'pretransfer' editing and involves the hydrolysis of activated Val-AMP. The other activity is designated 'posttransfer' editing and involves deacylation of mischarged Val-tRNA(Ile). The chain is Isoleucine--tRNA ligase from Pseudomonas putida (strain ATCC 47054 / DSM 6125 / CFBP 8728 / NCIMB 11950 / KT2440).